The sequence spans 100 residues: Small ribosomal subunit protein uS14c (100 aa).

This sequence belongs to the universal ribosomal protein uS14 family. Part of the 30S ribosomal subunit.

The protein resides in the plastid. It is found in the chloroplast. In terms of biological role, binds 16S rRNA, required for the assembly of 30S particles. The sequence is that of Small ribosomal subunit protein uS14c from Huperzia lucidula (Shining clubmoss).